The sequence spans 264 residues: Thiazole synthase (264 aa).

Residue K106 is the Schiff-base intermediate with DXP of the active site. 1-deoxy-D-xylulose 5-phosphate contacts are provided by residues G167, 193–194, and 215–216; these read AG and NS.

It belongs to the ThiG family. Homotetramer. Forms heterodimers with either ThiH or ThiS.

Its subcellular location is the cytoplasm. The catalysed reaction is [ThiS sulfur-carrier protein]-C-terminal-Gly-aminoethanethioate + 2-iminoacetate + 1-deoxy-D-xylulose 5-phosphate = [ThiS sulfur-carrier protein]-C-terminal Gly-Gly + 2-[(2R,5Z)-2-carboxy-4-methylthiazol-5(2H)-ylidene]ethyl phosphate + 2 H2O + H(+). Its pathway is cofactor biosynthesis; thiamine diphosphate biosynthesis. In terms of biological role, catalyzes the rearrangement of 1-deoxy-D-xylulose 5-phosphate (DXP) to produce the thiazole phosphate moiety of thiamine. Sulfur is provided by the thiocarboxylate moiety of the carrier protein ThiS. In vitro, sulfur can be provided by H(2)S. The chain is Thiazole synthase from Prochlorococcus marinus (strain MIT 9215).